Reading from the N-terminus, the 338-residue chain is Ketol-acid reductoisomerase (NADP(+)) (338 aa).

A KARI N-terminal Rossmann domain is found at 1–181; the sequence is MKVYYDKDCD…GGGRTGIIET (181 aa). NADP(+)-binding positions include 24-27, Arg47, Ser50, Thr52, and 82-85; these read YGSQ and DEFQ. His107 is an active-site residue. Residue Gly133 coordinates NADP(+). The 146-residue stretch at 182–327 folds into the KARI C-terminal knotted domain; it reads TFKDETETDL…EQLRSMMPWI (146 aa). Residues Asp190, Glu194, Glu226, and Glu230 each coordinate Mg(2+). Position 251 (Ser251) interacts with substrate.

Belongs to the ketol-acid reductoisomerase family. Mg(2+) is required as a cofactor.

It catalyses the reaction (2R)-2,3-dihydroxy-3-methylbutanoate + NADP(+) = (2S)-2-acetolactate + NADPH + H(+). The catalysed reaction is (2R,3R)-2,3-dihydroxy-3-methylpentanoate + NADP(+) = (S)-2-ethyl-2-hydroxy-3-oxobutanoate + NADPH + H(+). Its pathway is amino-acid biosynthesis; L-isoleucine biosynthesis; L-isoleucine from 2-oxobutanoate: step 2/4. It functions in the pathway amino-acid biosynthesis; L-valine biosynthesis; L-valine from pyruvate: step 2/4. Its function is as follows. Involved in the biosynthesis of branched-chain amino acids (BCAA). Catalyzes an alkyl-migration followed by a ketol-acid reduction of (S)-2-acetolactate (S2AL) to yield (R)-2,3-dihydroxy-isovalerate. In the isomerase reaction, S2AL is rearranged via a Mg-dependent methyl migration to produce 3-hydroxy-3-methyl-2-ketobutyrate (HMKB). In the reductase reaction, this 2-ketoacid undergoes a metal-dependent reduction by NADPH to yield (R)-2,3-dihydroxy-isovalerate. In Pseudomonas fluorescens (strain SBW25), this protein is Ketol-acid reductoisomerase (NADP(+)).